A 255-amino-acid polypeptide reads, in one-letter code: MNPPHSIDLNSDLGESYGSWVMGNDEAVLDLVSSANIACGFHAGDATVLLKTVVAAKARNVRIGAHIGYNDLTGFGRRAMEYDHEVLVAETIYQIGAIQAAATTVGATVDYVKPHGALYNRIAVDEAQAAAVIEAMKKLNPELPLMVLSGAPIVEQAISEGLTVIQETFADRAYTSDGRLVSRTQTGAVHHDPQVAARQALAFATGGSITSIDGDPVTVHADSICVHGDNPAALELVRTIIDTLRAHDVEVRRAR.

The protein belongs to the LamB/PxpA family. In terms of assembly, forms a complex composed of PxpA, PxpB and PxpC.

The enzyme catalyses 5-oxo-L-proline + ATP + 2 H2O = L-glutamate + ADP + phosphate + H(+). In terms of biological role, catalyzes the cleavage of 5-oxoproline to form L-glutamate coupled to the hydrolysis of ATP to ADP and inorganic phosphate. This chain is 5-oxoprolinase subunit A, found in Corynebacterium efficiens (strain DSM 44549 / YS-314 / AJ 12310 / JCM 11189 / NBRC 100395).